The sequence spans 322 residues: HPr kinase/phosphorylase (322 aa).

Catalysis depends on residues His146 and Lys167. 161–168 (GDSGLGKS) contributes to the ATP binding site. A Mg(2+)-binding site is contributed by Ser168. Asp185 (proton acceptor; for phosphorylation activity. Proton donor; for dephosphorylation activity) is an active-site residue. Residues 209 to 218 (LEVRGLGLLD) are important for the catalytic mechanism of both phosphorylation and dephosphorylation. Glu210 serves as a coordination point for Mg(2+). Arg250 is a catalytic residue. Residues 271 to 276 (QVAAGR) form an important for the catalytic mechanism of dephosphorylation region.

This sequence belongs to the HPrK/P family. In terms of assembly, homohexamer. The cofactor is Mg(2+).

The enzyme catalyses [HPr protein]-L-serine + ATP = [HPr protein]-O-phospho-L-serine + ADP + H(+). The catalysed reaction is [HPr protein]-O-phospho-L-serine + phosphate + H(+) = [HPr protein]-L-serine + diphosphate. In terms of biological role, catalyzes the ATP- as well as the pyrophosphate-dependent phosphorylation of a specific serine residue in HPr, a phosphocarrier protein of the phosphoenolpyruvate-dependent sugar phosphotransferase system (PTS). HprK/P also catalyzes the pyrophosphate-producing, inorganic phosphate-dependent dephosphorylation (phosphorolysis) of seryl-phosphorylated HPr (P-Ser-HPr). In Paraburkholderia xenovorans (strain LB400), this protein is HPr kinase/phosphorylase.